The primary structure comprises 224 residues: UPF0758 protein SPO0054 (224 aa).

Residues 102-224 enclose the MPN domain; that stretch reads VISSWDALLD…ELSFRAEGYL (123 aa). The Zn(2+) site is built by His-173, His-175, and Asp-186. The JAMM motif signature appears at 173–186; the sequence is HNHPSGDPTPSQSD.

It belongs to the UPF0758 family.

The chain is UPF0758 protein SPO0054 from Ruegeria pomeroyi (strain ATCC 700808 / DSM 15171 / DSS-3) (Silicibacter pomeroyi).